We begin with the raw amino-acid sequence, 421 residues long: UDP-N-acetylglucosamine 1-carboxyvinyltransferase (421 aa).

Residue 22-23 (KN) participates in phosphoenolpyruvate binding. Arg-94 is a binding site for UDP-N-acetyl-alpha-D-glucosamine. Cys-118 serves as the catalytic Proton donor. Cys-118 is modified (2-(S-cysteinyl)pyruvic acid O-phosphothioketal). Residues 163-166 (KVSV), Asp-308, and Ile-330 contribute to the UDP-N-acetyl-alpha-D-glucosamine site.

This sequence belongs to the EPSP synthase family. MurA subfamily.

The protein localises to the cytoplasm. The enzyme catalyses phosphoenolpyruvate + UDP-N-acetyl-alpha-D-glucosamine = UDP-N-acetyl-3-O-(1-carboxyvinyl)-alpha-D-glucosamine + phosphate. Its pathway is cell wall biogenesis; peptidoglycan biosynthesis. In terms of biological role, cell wall formation. Adds enolpyruvyl to UDP-N-acetylglucosamine. The polypeptide is UDP-N-acetylglucosamine 1-carboxyvinyltransferase (Orientia tsutsugamushi (strain Ikeda) (Rickettsia tsutsugamushi)).